A 517-amino-acid polypeptide reads, in one-letter code: GMP synthase [glutamine-hydrolyzing] (517 aa).

The Glutamine amidotransferase type-1 domain maps to 9-199; that stretch reads RILILDFGSQ…VLGVCGCERL (191 aa). The active-site Nucleophile is Cys-86. Catalysis depends on residues His-173 and Glu-175. The 193-residue stretch at 200 to 392 folds into the GMPS ATP-PPase domain; sequence WTSESIIEDA…LGLPYNMLYR (193 aa). Position 227 to 233 (227 to 233) interacts with ATP; that stretch reads SGGVDSS.

As to quaternary structure, homodimer.

It carries out the reaction XMP + L-glutamine + ATP + H2O = GMP + L-glutamate + AMP + diphosphate + 2 H(+). Its pathway is purine metabolism; GMP biosynthesis; GMP from XMP (L-Gln route): step 1/1. Its function is as follows. Catalyzes the synthesis of GMP from XMP. In Vibrio cholerae serotype O1 (strain ATCC 39541 / Classical Ogawa 395 / O395), this protein is GMP synthase [glutamine-hydrolyzing].